Consider the following 90-residue polypeptide: Putative UPF0401 protein YpjI (90 aa).

Belongs to the UPF0401 family.

The sequence is that of Putative UPF0401 protein YpjI (ypjI) from Escherichia coli (strain K12).